The sequence spans 178 residues: Probable DNA-directed RNA polymerase subunit delta (178 aa).

In terms of domain architecture, HTH HARE-type spans 14–81; that stretch reads LSLIDVAHFI…GNNTWGLRAW (68 aa). Disordered regions lie at residues 89–122 and 141–178; these read EEVQTQTTPKKKRKSDDDDDEDEEILDDDVDYDD and LDEDEDDDDHLPDGIEGDLATVEDDYTDGDYTEDPEDK. Composition is skewed to acidic residues over residues 105 to 122, 141 to 150, and 161 to 178; these read DDDDEDEEILDDDVDYDD, LDEDEDDDDH, and TVEDDYTDGDYTEDPEDK.

Belongs to the RpoE family. RNAP is composed of a core of 2 alpha, a beta and a beta' subunits. The core is associated with a delta subunit and one of several sigma factors.

Its function is as follows. Participates in both the initiation and recycling phases of transcription. In the presence of the delta subunit, RNAP displays an increased specificity of transcription, a decreased affinity for nucleic acids, and an increased efficiency of RNA synthesis because of enhanced recycling. This is Probable DNA-directed RNA polymerase subunit delta from Listeria innocua serovar 6a (strain ATCC BAA-680 / CLIP 11262).